The chain runs to 525 residues: Chromosomal replication initiator protein DnaA (525 aa).

Positions 1–71 (MNDFWQHCSA…SDLAREFWNT (71 aa)) are domain I, interacts with DnaA modulators. A domain II region spans residues 71–188 (TPIEVQFVLD…GEADSMYERS (118 aa)). Residues 162 to 182 (AGRRTWRPGPGAAPANGGEAD) form a disordered region. Residues 169–181 (PGPGAAPANGGEA) show a composition bias toward low complexity. A domain III, AAA+ region region spans residues 189 to 405 (KLNPVLTFDN…GALRKILAYS (217 aa)). Gly-233, Gly-235, Lys-236, and Thr-237 together coordinate ATP. The domain IV, binds dsDNA stretch occupies residues 406-525 (KFHGREISIE…LHVLEQTLKG (120 aa)).

The protein belongs to the DnaA family. Oligomerizes as a right-handed, spiral filament on DNA at oriC.

It is found in the cytoplasm. Plays an essential role in the initiation and regulation of chromosomal replication. ATP-DnaA binds to the origin of replication (oriC) to initiate formation of the DNA replication initiation complex once per cell cycle. Binds the DnaA box (a 9 base pair repeat at the origin) and separates the double-stranded (ds)DNA. Forms a right-handed helical filament on oriC DNA; dsDNA binds to the exterior of the filament while single-stranded (ss)DNA is stabiized in the filament's interior. The ATP-DnaA-oriC complex binds and stabilizes one strand of the AT-rich DNA unwinding element (DUE), permitting loading of DNA polymerase. After initiation quickly degrades to an ADP-DnaA complex that is not apt for DNA replication. Binds acidic phospholipids. The protein is Chromosomal replication initiator protein DnaA of Burkholderia cenocepacia (strain HI2424).